A 235-amino-acid chain; its full sequence is Protein LIFEGUARD 1 (235 aa).

7 consecutive transmembrane segments (helical) span residues Tyr-33–Val-53, Leu-67–Phe-87, Cys-95–Leu-115, Ile-120–Phe-140, Phe-149–Leu-169, Leu-178–Asp-198, and Ile-212–Ile-232.

Belongs to the BI1 family. Expressed at very low in leaves.

It localises to the membrane. Its function is as follows. (Microbial infection) Facilitates the development of the powdery mildew fungus E.cruciferarum. (Microbial infection) May prevent cell death upon A.alternata f.sp. lycopersici (AAL) toxin treatment. The chain is Protein LIFEGUARD 1 from Arabidopsis thaliana (Mouse-ear cress).